A 244-amino-acid polypeptide reads, in one-letter code: Probable H/ACA ribonucleoprotein complex subunit 1-like protein (244 aa).

Disordered stretches follow at residues 1–53 (MSFR…GGYD) and 145–244 (FLPQ…TKFE). RGG-box regions lie at residues 4 to 51 (RGGR…GRGG) and 153 to 222 (RGRG…RGRG). Residues 160–173 (RGGDRGGRGSDRGG) show a composition bias toward basic and acidic residues. 2 stretches are compositionally biased toward gly residues: residues 174–201 (RGGF…GGFR) and 208–217 (FRGGRGGDFG). A compositionally biased stretch (basic and acidic residues) spans 218–228 (GRGRGDFKRSY).

It belongs to the GAR1 family. As to quaternary structure, component of the small nucleolar ribonucleoprotein particle containing H/ACA-type snoRNAs (H/ACA snoRNPs).

The protein resides in the nucleus. The protein localises to the nucleolus. Required for ribosome biogenesis. Part of a complex which catalyzes pseudouridylation of rRNA. This involves the isomerization of uridine such that the ribose is subsequently attached to C5, instead of the normal N1. Pseudouridine ('psi') residues may serve to stabilize the conformation of rRNAs. Involved in phase separation into sub-nucleolar condensates. Essential for normal development and also plays a role in fertility. This is Probable H/ACA ribonucleoprotein complex subunit 1-like protein from Caenorhabditis elegans.